Consider the following 252-residue polypeptide: Glycerol-3-phosphate acyltransferase (252 aa).

Transmembrane regions (helical) follow at residues 6 to 26, 66 to 86, 104 to 124, 140 to 160, 164 to 184, and 204 to 224; these read SVAMAYILTLIISPLYSYLIG, ILTLFLDIVKPIITISLTYII, AILVYFGGIFTIIGHCYPIFF, ITIDPIVAVIGIITLLIILLI, MSLSAMITATITCFLVLIPGI, and VIKGTWYVWLFLLISASILIY.

It belongs to the PlsY family. In terms of assembly, probably interacts with PlsX.

The protein localises to the cell membrane. The catalysed reaction is an acyl phosphate + sn-glycerol 3-phosphate = a 1-acyl-sn-glycero-3-phosphate + phosphate. It participates in lipid metabolism; phospholipid metabolism. Catalyzes the transfer of an acyl group from acyl-phosphate (acyl-PO(4)) to glycerol-3-phosphate (G3P) to form lysophosphatidic acid (LPA). This enzyme utilizes acyl-phosphate as fatty acyl donor, but not acyl-CoA or acyl-ACP. The sequence is that of Glycerol-3-phosphate acyltransferase from Ureaplasma urealyticum serovar 10 (strain ATCC 33699 / Western).